A 276-amino-acid chain; its full sequence is Diaminopimelate epimerase (276 aa).

Substrate-binding residues include N13, Q46, and N66. The active-site Proton donor is C75. Substrate contacts are provided by residues 76 to 77 (GN), N159, N192, and 210 to 211 (ER). The active-site Proton acceptor is the C219. Residue 220-221 (GT) coordinates substrate.

This sequence belongs to the diaminopimelate epimerase family. Homodimer.

The protein localises to the cytoplasm. It catalyses the reaction (2S,6S)-2,6-diaminopimelate = meso-2,6-diaminopimelate. The protein operates within amino-acid biosynthesis; L-lysine biosynthesis via DAP pathway; DL-2,6-diaminopimelate from LL-2,6-diaminopimelate: step 1/1. Catalyzes the stereoinversion of LL-2,6-diaminopimelate (L,L-DAP) to meso-diaminopimelate (meso-DAP), a precursor of L-lysine and an essential component of the bacterial peptidoglycan. This is Diaminopimelate epimerase from Ectopseudomonas mendocina (strain ymp) (Pseudomonas mendocina).